Consider the following 223-residue polypeptide: Ribose-5-phosphate isomerase A (223 aa).

Residues 32-35 (TGST), 85-88 (DGAD), and 98-101 (KGGG) contribute to the substrate site. The active-site Proton acceptor is the E107. K125 contacts substrate.

It belongs to the ribose 5-phosphate isomerase family. Homodimer.

The catalysed reaction is aldehydo-D-ribose 5-phosphate = D-ribulose 5-phosphate. Its pathway is carbohydrate degradation; pentose phosphate pathway; D-ribose 5-phosphate from D-ribulose 5-phosphate (non-oxidative stage): step 1/1. Catalyzes the reversible conversion of ribose-5-phosphate to ribulose 5-phosphate. The chain is Ribose-5-phosphate isomerase A from Pseudomonas syringae pv. tomato (strain ATCC BAA-871 / DC3000).